The chain runs to 177 residues: Alkyl hydroperoxide reductase AhpD (177 aa).

Residue C133 is the Proton donor of the active site. The cysteines at positions 133 and 136 are disulfide-linked. The Cysteine sulfenic acid (-SOH) intermediate role is filled by C136.

The protein belongs to the AhpD family.

The enzyme catalyses N(6)-[(R)-dihydrolipoyl]-L-lysyl-[lipoyl-carrier protein] + a hydroperoxide = N(6)-[(R)-lipoyl]-L-lysyl-[lipoyl-carrier protein] + an alcohol + H2O. Antioxidant protein with alkyl hydroperoxidase activity. Required for the reduction of the AhpC active site cysteine residues and for the regeneration of the AhpC enzyme activity. This is Alkyl hydroperoxide reductase AhpD from Coxiella burnetii (strain CbuG_Q212) (Coxiella burnetii (strain Q212)).